The following is a 269-amino-acid chain: Triosephosphate isomerase (269 aa).

8–10 contacts substrate; the sequence is NWK. The active-site Electrophile is the histidine 105. Residue glutamate 183 is the Proton acceptor of the active site. Substrate is bound by residues glycine 189, serine 227, and 248-249; that span reads GG.

The protein belongs to the triosephosphate isomerase family. In terms of assembly, homodimer.

The protein localises to the cytoplasm. It carries out the reaction D-glyceraldehyde 3-phosphate = dihydroxyacetone phosphate. It functions in the pathway carbohydrate biosynthesis; gluconeogenesis. Its pathway is carbohydrate degradation; glycolysis; D-glyceraldehyde 3-phosphate from glycerone phosphate: step 1/1. Its function is as follows. Involved in the gluconeogenesis. Catalyzes stereospecifically the conversion of dihydroxyacetone phosphate (DHAP) to D-glyceraldehyde-3-phosphate (G3P). The sequence is that of Triosephosphate isomerase from Psychrobacter cryohalolentis (strain ATCC BAA-1226 / DSM 17306 / VKM B-2378 / K5).